The sequence spans 214 residues: Auxin-binding protein ABP20 (214 aa).

An N-terminal signal peptide occupies residues M1–A23. C29 and C44 are disulfide-bonded. Residues S58 to K204 enclose the Cupin type-1 domain. N65 is a glycosylation site (N-linked (GlcNAc...) asparagine). Positions 106, 108, 113, and 152 each coordinate Mn(2+).

This sequence belongs to the germin family. Interacts with ABP19.

The protein localises to the secreted. It localises to the extracellular space. Its subcellular location is the apoplast. The protein resides in the cell wall. In terms of biological role, probable receptor for the plant growth-promoting hormone auxin. In Prunus persica (Peach), this protein is Auxin-binding protein ABP20 (ABP20).